The following is a 462-amino-acid chain: UDP-N-acetylmuramate--L-alanine ligase (462 aa).

116-122 provides a ligand contact to ATP; it reads GAHGKTT.

It belongs to the MurCDEF family.

It is found in the cytoplasm. It catalyses the reaction UDP-N-acetyl-alpha-D-muramate + L-alanine + ATP = UDP-N-acetyl-alpha-D-muramoyl-L-alanine + ADP + phosphate + H(+). It participates in cell wall biogenesis; peptidoglycan biosynthesis. Its function is as follows. Cell wall formation. The sequence is that of UDP-N-acetylmuramate--L-alanine ligase from Desulforamulus reducens (strain ATCC BAA-1160 / DSM 100696 / MI-1) (Desulfotomaculum reducens).